Here is a 237-residue protein sequence, read N- to C-terminus: Ubiquinone biosynthesis O-methyltransferase (237 aa).

Residues arginine 38, glycine 58, aspartate 79, and methionine 124 each contribute to the S-adenosyl-L-methionine site.

This sequence belongs to the methyltransferase superfamily. UbiG/COQ3 family.

The catalysed reaction is a 3-demethylubiquinol + S-adenosyl-L-methionine = a ubiquinol + S-adenosyl-L-homocysteine + H(+). The enzyme catalyses a 3-(all-trans-polyprenyl)benzene-1,2-diol + S-adenosyl-L-methionine = a 2-methoxy-6-(all-trans-polyprenyl)phenol + S-adenosyl-L-homocysteine + H(+). It functions in the pathway cofactor biosynthesis; ubiquinone biosynthesis. O-methyltransferase that catalyzes the 2 O-methylation steps in the ubiquinone biosynthetic pathway. In Acinetobacter baumannii (strain SDF), this protein is Ubiquinone biosynthesis O-methyltransferase.